A 133-amino-acid chain; its full sequence is Small ribosomal subunit protein uS8 (133 aa).

This sequence belongs to the universal ribosomal protein uS8 family. As to quaternary structure, part of the 30S ribosomal subunit. Contacts proteins S5 and S12.

Functionally, one of the primary rRNA binding proteins, it binds directly to 16S rRNA central domain where it helps coordinate assembly of the platform of the 30S subunit. This chain is Small ribosomal subunit protein uS8, found in Trichormus variabilis (strain ATCC 29413 / PCC 7937) (Anabaena variabilis).